The primary structure comprises 250 residues: Archaeal flagellar motor scaffold protein FlaX (250 aa).

Residues 1 to 9 (MAIQDLLQS) lie on the Extracellular side of the membrane. A helical transmembrane segment spans residues 10-30 (SLFIILIGVGIPIAAFLEILF). Residues 31–250 (RVILPKTKRV…MILEGGGVNG (220 aa)) are Cytoplasmic-facing. Over residues 42–61 (TQQSPQNISQEQRFPTQQKP) the composition is skewed to polar residues. A disordered region spans residues 42–72 (TQQSPQNISQEQRFPTQQKPANDETSKYSSD). Residues 62–72 (ANDETSKYSSD) show a composition bias toward basic and acidic residues.

As to quaternary structure, the S.acidocaldarius archaellum assembly machinery and its filament consist of seven proteins (FlaB, FlaF, FlaG, FlaH, FlaI, FlaJ and FlaX). FlaX assembles into ring-shaped oligomers. Interacts directly with FlaH and the motor ATPase FlaI.

It localises to the archaeal flagellum. The protein localises to the cell membrane. Its activity is regulated as follows. The presence of the flagellar core components FlaH, FlaI and FlaJ seems to be crucial for the stability of FlaX. Functionally, component of the archaellum. FlaX, FlaH and FlaI form the core cytoplasmic motor complex of the crenarchaeal archaellum. FlaX forms a ring that may act as a membrane-bound cytoplasmic scaffold that guides the assembly of the archaellum motor complex. Is essential for archaellum assembly. The sequence is that of Archaeal flagellar motor scaffold protein FlaX from Sulfolobus acidocaldarius (strain ATCC 33909 / DSM 639 / JCM 8929 / NBRC 15157 / NCIMB 11770).